A 500-amino-acid polypeptide reads, in one-letter code: Lysine--tRNA ligase (500 aa).

Mg(2+) contacts are provided by glutamate 410 and glutamate 417.

It belongs to the class-II aminoacyl-tRNA synthetase family. As to quaternary structure, homodimer. It depends on Mg(2+) as a cofactor.

It is found in the cytoplasm. The enzyme catalyses tRNA(Lys) + L-lysine + ATP = L-lysyl-tRNA(Lys) + AMP + diphosphate. The chain is Lysine--tRNA ligase from Shewanella putrefaciens (strain CN-32 / ATCC BAA-453).